The primary structure comprises 385 residues: cAMP-dependent protein kinase regulatory subunit (385 aa).

A compositionally biased stretch (polar residues) spans 1 to 22; the sequence is MSSTGFTSPFGNANPFGSSGRS. 2 disordered regions span residues 1-51 and 77-111; these read MSST…GVKN and DFPAHYNLGRRTSVSAESLKPVTDNSDNWSPPVHP. The segment at 1-128 is dimerization and phosphorylation; the sequence is MSSTGFTSPF…RLKKAISGNF (128 aa). Phosphoserine is present on Ser89. 3',5'-cyclic AMP contacts are provided by residues 129–260, Glu207, Arg216, 261–378, Glu328, and Arg337; these read LFNH…EEVP and ILKT…EAEE.

This sequence belongs to the cAMP-dependent kinase regulatory chain family. In terms of assembly, tetramer, composed of 2 regulatory (R) and 2 catalytic (C) subunits. In the presence of cAMP it dissociates into 2 active monomeric C subunits and an R dimer.

The polypeptide is cAMP-dependent protein kinase regulatory subunit (mcb) (Neurospora crassa (strain ATCC 24698 / 74-OR23-1A / CBS 708.71 / DSM 1257 / FGSC 987)).